The primary structure comprises 329 residues: uncharacterized protein (329 aa).

It to type I restriction system adenine methylases.

This is an uncharacterized protein from Bacillus subtilis (strain 168).